The primary structure comprises 593 residues: Efflux pump FUBT (593 aa).

Residues 1–44 (MAIDPQPSSPSLSSETIANDTIGNDNNVNEPSVEPKTQENQHTV) form a disordered region. Residues 9–30 (SPSLSSETIANDTIGNDNNVNE) are compositionally biased toward polar residues. N-linked (GlcNAc...) asparagine glycosylation is present at N19. Transmembrane regions (helical) follow at residues 98-118 (WAFVLLQSLACLATTFASSAY), 135-155 (VATLGISLYVLGFTFGPLIWA), 167-187 (FFFTFMVATAFSAGAAGAGSI), 195-215 (FLTGSIGSAPLSNAPALIADM), 227-247 (MFSGAPFLGPAIGPIAGGFLG), 254-274 (WLHGLMAAFTGVTWIACTVFI), 337-357 (IYISIIYGTMYMCFAAFPIVF), 367-387 (IGGLAFTGIVIGVVLSIISFA), 410-430 (LPPAIMGSLLIPIGLFWFAWT), 438-458 (IVPIIGTVFFAWGLVLVFMAL), 468-488 (IFAASIMAANSALRSLFGAAF), and 503-523 (WASSIPAFLALACVPFPFLFY). The interval 570–593 (THNSHASAAHSHGHRRSLSYTRSV) is disordered.

Belongs to the major facilitator superfamily. DHA1 family. Polyamines/proton antiporter (TC 2.A.1.2.16) subfamily.

The protein localises to the cell membrane. Its function is as follows. Efflux pump involved in export of fusaric acid, a mycotoxin with low to moderate toxicity to animals and humans, but with high phytotoxic properties. Constitutes a self-protecting mechanism of the fungus against critical levels of FSA within the cell. The sequence is that of Efflux pump FUBT from Fusarium oxysporum (Fusarium vascular wilt).